The primary structure comprises 249 residues: Putative S-adenosyl-L-methionine-dependent methyltransferase Mjls_0570 (249 aa).

Residues D111 and 141 to 142 (DL) each bind S-adenosyl-L-methionine.

This sequence belongs to the UPF0677 family.

In terms of biological role, exhibits S-adenosyl-L-methionine-dependent methyltransferase activity. The polypeptide is Putative S-adenosyl-L-methionine-dependent methyltransferase Mjls_0570 (Mycobacterium sp. (strain JLS)).